Consider the following 1853-residue polypeptide: Cellulosomal-scaffolding protein A (1853 aa).

Residues 1–28 (MRKVISMLLVVAMLTTIFAAMIPQTVSA) form the signal peptide. 2 consecutive Cohesin domains span residues 29–182 (ATMT…VPSD) and 183–322 (GVVV…VNVG). 2 linker (Pro/Thr-rich) regions span residues 323–363 (NATP…PANT) and 523–559 (GGSV…SDDP). Low complexity predominate over residues 323–364 (NATPTKGATPTNTATPTKSATATPTRPSVPTNTPTNTPANTP). 2 disordered regions span residues 323–367 (NATP…PVSG) and 525–559 (SVVP…SDDP). The CBM3 domain occupies 365 to 523 (VSGNLKVEFY…GVLVWGKEPG (159 aa)). Residues 525–555 (SVVPSTQPVTTPPATTKPPATTKPPATTIPP) show a composition bias toward low complexity. Cohesin domains follow at residues 560-704 (NAIK…NVGD), 724-866 (AVRI…VNVG), 889-1031 (AVRI…VNVG), 1054-1196 (AVRI…VNVG), 1219-1361 (AVRI…VNVG), 1384-1526 (AVRI…VNVG), and 1548-1690 (KLTL…VLVT). Residues 1785 to 1852 (IMMWVGDIVK…FGATSSDYDA (68 aa)) form the Dockerin domain.

In terms of processing, O-glycosylated on most but not all Thr residues of the linker units. The reducing sugar is galactopyranose.

It is found in the secreted. Its function is as follows. Acts as a scaffolding protein in the cellulosome. It promotes binding of cellulose to the catalytic domains of the cellulolytic enzymes. This is Cellulosomal-scaffolding protein A (cipA) from Acetivibrio thermocellus (strain ATCC 27405 / DSM 1237 / JCM 9322 / NBRC 103400 / NCIMB 10682 / NRRL B-4536 / VPI 7372) (Clostridium thermocellum).